A 638-amino-acid polypeptide reads, in one-letter code: LEAF RUST 10 DISEASE-RESISTANCE LOCUS RECEPTOR-LIKE PROTEIN KINASE-like 2.1 (638 aa).

The signal sequence occupies residues 1–29 (MINLSLYQTNSLSYTIIWMLFVIPSCVLS). The Extracellular segment spans residues 30–264 (VDERQKHCSP…EHTCGKMGIG (235 aa)). 5 N-linked (GlcNAc...) asparagine glycosylation sites follow: Asn69, Asn114, Asn136, Asn204, and Asn239. Residues 265–285 (IGLGCGFLGATLITVCLLCFF) traverse the membrane as a helical segment. The Cytoplasmic segment spans residues 286–638 (FQKRRTSHHL…YTEVFIGSTS (353 aa)). The Protein kinase domain maps to 321 to 609 (KLFSHTLGKG…VLEVPPKPSI (289 aa)). Residues 327–335 (LGKGGFGTV) and Lys349 contribute to the ATP site. Tyr393 carries the phosphotyrosine modification. The active-site Proton acceptor is the Asp444. Thr484 carries the phosphothreonine modification.

The protein belongs to the protein kinase superfamily. Ser/Thr protein kinase family.

It localises to the membrane. It carries out the reaction L-seryl-[protein] + ATP = O-phospho-L-seryl-[protein] + ADP + H(+). The enzyme catalyses L-threonyl-[protein] + ATP = O-phospho-L-threonyl-[protein] + ADP + H(+). The sequence is that of LEAF RUST 10 DISEASE-RESISTANCE LOCUS RECEPTOR-LIKE PROTEIN KINASE-like 2.1 from Arabidopsis thaliana (Mouse-ear cress).